Here is a 574-residue protein sequence, read N- to C-terminus: Putative DNA-directed RNA polymerase subunit alpha-like 1 (574 aa).

The tract at residues 1–352 (MTNNKNFADW…ELFSLFLQTS (352 aa)) is alpha N-terminal domain (alpha-NTD). The segment at 419–574 (PDYDRYNSIT…RERKRGNREF (156 aa)) is alpha C-terminal domain (alpha-CTD). The tract at residues 534 to 574 (QETLRKEQDEQSSQQQKDQMEKRRWERQNRERERKRGNREF) is disordered. A compositionally biased stretch (basic and acidic residues) spans 551-574 (DQMEKRRWERQNRERERKRGNREF).

The protein belongs to the RNA polymerase alpha chain family. In terms of assembly, in plastids the minimal PEP RNA polymerase catalytic core is composed of four subunits: alpha, beta, beta', and beta''. When a (nuclear-encoded) sigma factor is associated with the core the holoenzyme is formed, which can initiate transcription.

It is found in the plastid. The protein resides in the chloroplast. It catalyses the reaction RNA(n) + a ribonucleoside 5'-triphosphate = RNA(n+1) + diphosphate. In terms of biological role, DNA-dependent RNA polymerase catalyzes the transcription of DNA into RNA using the four ribonucleoside triphosphates as substrates. The polypeptide is Putative DNA-directed RNA polymerase subunit alpha-like 1 (rpoAL1-A) (Pelargonium hortorum (Common geranium)).